A 1060-amino-acid chain; its full sequence is Carbamoyl phosphate synthase large chain (1060 aa).

A carboxyphosphate synthetic domain region spans residues 1-401 (MPKRTDIKKI…SLLKAVRSLE (401 aa)). ATP-binding residues include R129, R169, G175, G176, K208, I210, E215, G241, I242, H243, Q284, and E298. In terms of domain architecture, ATP-grasp 1 spans 133-327 (KQLMEELEQP…IAKLAAKIAV (195 aa)). 3 residues coordinate Mg(2+): Q284, E298, and N300. The Mn(2+) site is built by Q284, E298, and N300. The tract at residues 402-546 (IGAYHNELAE…YSTYEVENES (145 aa)) is oligomerization domain. Positions 547–929 (NVSKKPSVLV…ALYKAFEASG (383 aa)) are carbamoyl phosphate synthetic domain. The 191-residue stretch at 671-861 (EQALQELAIP…MAQVATKAIL (191 aa)) folds into the ATP-grasp 2 domain. Residues R707, S746, L748, E752, G777, V778, H779, S780, Q820, and E832 each contribute to the ATP site. Positions 820, 832, and 834 each coordinate Mg(2+). The Mn(2+) site is built by Q820, E832, and N834. One can recognise an MGS-like domain in the interval 930-1060 (LHLPSYGAVL…ESRAFTTEAI (131 aa)). The tract at residues 930–1060 (LHLPSYGAVL…ESRAFTTEAI (131 aa)) is allosteric domain.

The protein belongs to the CarB family. In terms of assembly, composed of two chains; the small (or glutamine) chain promotes the hydrolysis of glutamine to ammonia, which is used by the large (or ammonia) chain to synthesize carbamoyl phosphate. Tetramer of heterodimers (alpha,beta)4. The cofactor is Mg(2+). Mn(2+) serves as cofactor.

It carries out the reaction hydrogencarbonate + L-glutamine + 2 ATP + H2O = carbamoyl phosphate + L-glutamate + 2 ADP + phosphate + 2 H(+). The catalysed reaction is hydrogencarbonate + NH4(+) + 2 ATP = carbamoyl phosphate + 2 ADP + phosphate + 2 H(+). Its pathway is amino-acid biosynthesis; L-arginine biosynthesis; carbamoyl phosphate from bicarbonate: step 1/1. The protein operates within pyrimidine metabolism; UMP biosynthesis via de novo pathway; (S)-dihydroorotate from bicarbonate: step 1/3. In terms of biological role, large subunit of the glutamine-dependent carbamoyl phosphate synthetase (CPSase). CPSase catalyzes the formation of carbamoyl phosphate from the ammonia moiety of glutamine, carbonate, and phosphate donated by ATP, constituting the first step of 2 biosynthetic pathways, one leading to arginine and/or urea and the other to pyrimidine nucleotides. The large subunit (synthetase) binds the substrates ammonia (free or transferred from glutamine from the small subunit), hydrogencarbonate and ATP and carries out an ATP-coupled ligase reaction, activating hydrogencarbonate by forming carboxy phosphate which reacts with ammonia to form carbamoyl phosphate. The sequence is that of Carbamoyl phosphate synthase large chain from Enterococcus faecalis (strain ATCC 700802 / V583).